Reading from the N-terminus, the 305-residue chain is GMP synthase [glutamine-hydrolyzing] subunit B (305 aa).

Positions 2–184 constitute a GMPS ATP-PPase domain; the sequence is VKPEKFIPKA…LQLPEEICER (183 aa). An ATP-binding site is contributed by 29–35; the sequence is SGGVDSS.

In terms of assembly, heterodimer composed of a glutamine amidotransferase subunit (A) and a GMP-binding subunit (B).

It catalyses the reaction XMP + L-glutamine + ATP + H2O = GMP + L-glutamate + AMP + diphosphate + 2 H(+). Its pathway is purine metabolism; GMP biosynthesis; GMP from XMP (L-Gln route): step 1/1. In terms of biological role, catalyzes the synthesis of GMP from XMP. The polypeptide is GMP synthase [glutamine-hydrolyzing] subunit B (guaAB) (Methanosarcina acetivorans (strain ATCC 35395 / DSM 2834 / JCM 12185 / C2A)).